The primary structure comprises 67 residues: Beta-defensin 1 (67 aa).

Residues 1–22 (MRIHYLLFAVLFLFLMPVPGEG) form the signal peptide. 3 disulfides stabilise this stretch: Cys33/Cys62, Cys40/Cys55, and Cys45/Cys63.

In terms of assembly, monomer. Homodimer. As to expression, highly expressed in tongue, nasopharyngeal mucosa and skin, and to a lower extent in the Eustachian tube, lung and trachea.

The protein localises to the secreted. The protein resides in the membrane. Functionally, has antibacterial activity against Gram-positive bacterium S.pneumoniae Serotype 14. Is also active against Gram-negative bacteria M.catarrhalis 1857, and non-typeable H.influenzae strains 86-028NP and 1128. Has antifungal activity against C.albicans. May have a role in maintaining sterility in the middle ear. May act as a ligand for C-C chemokine receptor CCR6. Positively regulates the sperm motility and bactericidal activity in a CCR6-dependent manner. Binds to CCR6 and triggers Ca2+ mobilization in the sperm which is important for its motility. The polypeptide is Beta-defensin 1 (DEFB1) (Chinchilla lanigera (Long-tailed chinchilla)).